The following is a 118-amino-acid chain: Large ribosomal subunit protein bL19 (118 aa).

Belongs to the bacterial ribosomal protein bL19 family.

Functionally, this protein is located at the 30S-50S ribosomal subunit interface and may play a role in the structure and function of the aminoacyl-tRNA binding site. This chain is Large ribosomal subunit protein bL19, found in Campylobacter concisus (strain 13826).